The primary structure comprises 330 residues: DNA-directed RNA polymerase subunit alpha (330 aa).

The segment at 1-235 is alpha N-terminal domain (alpha-NTD); the sequence is MQGSVTEFLK…EQLEAFVDLR (235 aa). Positions 249 to 330 are alpha C-terminal domain (alpha-CTD); the sequence is FDPILLRPVD…WPPASIADNE (82 aa).

Belongs to the RNA polymerase alpha chain family. Homodimer. The RNAP catalytic core consists of 2 alpha, 1 beta, 1 beta' and 1 omega subunit. When a sigma factor is associated with the core the holoenzyme is formed, which can initiate transcription.

It carries out the reaction RNA(n) + a ribonucleoside 5'-triphosphate = RNA(n+1) + diphosphate. In terms of biological role, DNA-dependent RNA polymerase catalyzes the transcription of DNA into RNA using the four ribonucleoside triphosphates as substrates. In Yersinia enterocolitica serotype O:8 / biotype 1B (strain NCTC 13174 / 8081), this protein is DNA-directed RNA polymerase subunit alpha.